The following is a 383-amino-acid chain: Acetylornithine deacetylase (383 aa).

His-80 contacts Zn(2+). Asp-82 is a catalytic residue. Residue Asp-112 coordinates Zn(2+). Glu-144 is a catalytic residue. The Zn(2+) site is built by Glu-145, Glu-169, and His-355.

This sequence belongs to the peptidase M20A family. ArgE subfamily. In terms of assembly, homodimer. Requires Zn(2+) as cofactor. Co(2+) serves as cofactor. The cofactor is glutathione.

The protein resides in the cytoplasm. The enzyme catalyses N(2)-acetyl-L-ornithine + H2O = L-ornithine + acetate. It functions in the pathway amino-acid biosynthesis; L-arginine biosynthesis; L-ornithine from N(2)-acetyl-L-ornithine (linear): step 1/1. In terms of biological role, catalyzes the hydrolysis of the amide bond of N(2)-acetylated L-amino acids. Cleaves the acetyl group from N-acetyl-L-ornithine to form L-ornithine, an intermediate in L-arginine biosynthesis pathway, and a branchpoint in the synthesis of polyamines. The sequence is that of Acetylornithine deacetylase from Escherichia coli O45:K1 (strain S88 / ExPEC).